Consider the following 369-residue polypeptide: 2-aminoethylphosphonate--pyruvate transaminase (369 aa).

Lys193 is subject to N6-(pyridoxal phosphate)lysine.

It belongs to the class-V pyridoxal-phosphate-dependent aminotransferase family. PhnW subfamily. In terms of assembly, homodimer. Pyridoxal 5'-phosphate serves as cofactor.

The enzyme catalyses (2-aminoethyl)phosphonate + pyruvate = phosphonoacetaldehyde + L-alanine. Involved in phosphonate degradation. The polypeptide is 2-aminoethylphosphonate--pyruvate transaminase (Burkholderia pseudomallei (strain K96243)).